The sequence spans 406 residues: Probable 4-hydroxyphenylpyruvate dioxygenase 2 (406 aa).

VOC domains lie at 22 to 174 (GFDH…LINR) and 205 to 363 (EIDH…IFSK). The Fe cation site is built by His-208, His-291, and Glu-374.

This sequence belongs to the 4HPPD family. Fe cation serves as cofactor.

The catalysed reaction is 3-(4-hydroxyphenyl)pyruvate + O2 = homogentisate + CO2. The protein operates within amino-acid degradation; L-phenylalanine degradation; acetoacetate and fumarate from L-phenylalanine: step 3/6. This is Probable 4-hydroxyphenylpyruvate dioxygenase 2 from Aspergillus fumigatus (strain ATCC MYA-4609 / CBS 101355 / FGSC A1100 / Af293) (Neosartorya fumigata).